A 448-amino-acid polypeptide reads, in one-letter code: MNTSFDPVAANSNSANVTPGYMSGFGNSFETEALPGALPIGRNSPQRCAYGLYAEQLSGSPFTAPRGANERSWLYRIRPSVRHSGHFVKIDAKLWRTAPCLEHDMPLAQLRWDPTPIPEDELTFVQSVRTMTTAGDAHTQTGMAAHIYLITRSMVDQHFYNADGEMLFVPQGGSLRFVTEFGVIDTEPGEIAVIPRGVKFRVEIPSGPARGYLCENYGGAFTLPERGPIGANCLANSRDFLTPVAAYEDDDKPTELFVKWGGALWSTALPHSPIDVVAWHGNYAPYKYDLRTFSPIGAIGFDHPDPSIFTVLTSPSEIAGTANIDFVIFPERWVVAENTFRPPWYHMNVMSEFMGLIYGVYDAKPQGFVPGGISLHNCMLPHGPDREAFDHASNTELKPVKLTGTLAFMFETRFPQRVTEYAATSDALQDDYADCWQGLERRFDPTRP.

Histidine 303 acts as the Proton acceptor in catalysis. The Fe cation site is built by histidine 346 and glutamate 352. 2 residues coordinate homogentisate: tyrosine 361 and histidine 382. Histidine 382 contributes to the Fe cation binding site.

Belongs to the homogentisate dioxygenase family. As to quaternary structure, hexamer; dimer of trimers. Requires Fe cation as cofactor.

The catalysed reaction is homogentisate + O2 = 4-maleylacetoacetate + H(+). The protein operates within amino-acid degradation; L-phenylalanine degradation; acetoacetate and fumarate from L-phenylalanine: step 4/6. Involved in the catabolism of homogentisate (2,5-dihydroxyphenylacetate or 2,5-OH-PhAc), a central intermediate in the degradation of phenylalanine and tyrosine. Catalyzes the oxidative ring cleavage of the aromatic ring of homogentisate to yield maleylacetoacetate. The chain is Homogentisate 1,2-dioxygenase from Nitrobacter hamburgensis (strain DSM 10229 / NCIMB 13809 / X14).